Consider the following 384-residue polypeptide: Cell division protein FtsZ (384 aa).

GTP-binding positions include 20–24 (GGGGN), 107–109 (GTG), Glu138, Arg142, and Asn186.

The protein belongs to the FtsZ family. Homodimer. Polymerizes to form a dynamic ring structure in a strictly GTP-dependent manner. Interacts directly with several other division proteins.

It is found in the cytoplasm. Functionally, essential cell division protein that forms a contractile ring structure (Z ring) at the future cell division site. The regulation of the ring assembly controls the timing and the location of cell division. One of the functions of the FtsZ ring is to recruit other cell division proteins to the septum to produce a new cell wall between the dividing cells. Binds GTP and shows GTPase activity. The protein is Cell division protein FtsZ of Buchnera aphidicola subsp. Schizaphis graminum (strain Sg).